The sequence spans 607 residues: Actin-related protein 5 (607 aa).

Residue Lys283 forms a Glycyl lysine isopeptide (Lys-Gly) (interchain with G-Cter in SUMO2) linkage. Coiled coils occupy residues 288–327 and 355–384; these read TLTS…LDRL and EELQ…NLEV. The segment covering 584-596 has biased composition (low complexity); it reads SRSSDAQASSKGS. The disordered stretch occupies residues 584-607; sequence SRSSDAQASSKGSAAGGGGAGEQA. A compositionally biased stretch (gly residues) spans 597-607; that stretch reads AAGGGGAGEQA.

It belongs to the actin family. ARP5 subfamily. In terms of assembly, component of the chromatin remodeling INO80 complex; specifically part of a complex module associated with the helicase ATP-binding and the helicase C-terminal domain of INO80. Interacts with DDB1. Interacts with ACTR8; the interaction is observed in asynchronous (interphase) cells but not in metaphase-arrested cells indicative for a possible dissociation of the INO80 complex in mitotic cells.

The protein resides in the nucleus. The protein localises to the cytoplasm. Functionally, proposed core component of the chromatin remodeling INO80 complex which is involved in transcriptional regulation, DNA replication and probably DNA repair. Involved in DNA double-strand break repair and UV-damage excision repair. In Homo sapiens (Human), this protein is Actin-related protein 5 (ACTR5).